Reading from the N-terminus, the 822-residue chain is Pentatricopeptide repeat-containing protein At2g18940, chloroplastic (822 aa).

A disordered region spans residues 1-42; sequence MDGALFPHKPPYPIQSKRPPPSQSSNQSIKFSSATLHLPPPS. Residues 1 to 77 constitute a chloroplast transit peptide; that stretch reads MDGALFPHKP…SAAARFPSLE (77 aa). The segment covering 8-22 has biased composition (pro residues); it reads HKPPYPIQSKRPPPS. Over residues 23–37 the composition is skewed to low complexity; that stretch reads QSSNQSIKFSSATLH. 17 PPR repeats span residues 209–243, 244–279, 280–314, 315–349, 350–384, 385–419, 420–454, 455–489, 490–524, 525–559, 560–594, 595–629, 630–664, 665–699, 700–734, 735–769, and 770–800; these read DVRA…GPSP, TLVT…GLKF, DEFT…GYEP, GTVT…SCPA, DSVT…GVMP, NAIT…GCVP, NTCT…GCSP, NRAT…GFEP, DRDT…GFNA, CVTT…GFKP, TETS…QIFP, SWML…GYKP, DMVI…GLSP, DLVT…QLKP, DLVS…GIRP, CIFT…DCRP, and NELT…IKTF.

This sequence belongs to the PPR family. P subfamily.

The protein localises to the plastid. It is found in the chloroplast. This Arabidopsis thaliana (Mouse-ear cress) protein is Pentatricopeptide repeat-containing protein At2g18940, chloroplastic.